The primary structure comprises 48 residues: Toxin CSTX-15 (48 aa).

Cystine bridges form between C3-C18, C10-C27, C17-C42, and C29-C40.

Belongs to the neurotoxin 19 (CSTX) family. 12 subfamily. In terms of assembly, heterodimer of A and B chains; disulfide-linked. In terms of processing, contains 4 disulfide bonds. Expressed by the venom gland.

It is found in the secreted. In Cupiennius salei (American wandering spider), this protein is Toxin CSTX-15.